A 477-amino-acid chain; its full sequence is Glycogen synthase (477 aa).

Residue Lys15 coordinates ADP-alpha-D-glucose.

The protein belongs to the glycosyltransferase 1 family. Bacterial/plant glycogen synthase subfamily.

It catalyses the reaction [(1-&gt;4)-alpha-D-glucosyl](n) + ADP-alpha-D-glucose = [(1-&gt;4)-alpha-D-glucosyl](n+1) + ADP + H(+). It participates in glycan biosynthesis; glycogen biosynthesis. Functionally, synthesizes alpha-1,4-glucan chains using ADP-glucose. This is Glycogen synthase from Serratia proteamaculans (strain 568).